We begin with the raw amino-acid sequence, 67 residues long: MAVPKRKMSRSNTRARRSQWKAEAPTLVKTIENGKVVYSMPHRARVIEDAAGTPLYMEYKGRKVADV.

Over residues 1–19 the composition is skewed to basic residues; the sequence is MAVPKRKMSRSNTRARRSQ. The disordered stretch occupies residues 1 to 21; it reads MAVPKRKMSRSNTRARRSQWK.

This sequence belongs to the bacterial ribosomal protein bL32 family.

The sequence is that of Large ribosomal subunit protein bL32 from Clavibacter sepedonicus (Clavibacter michiganensis subsp. sepedonicus).